Reading from the N-terminus, the 300-residue chain is Cell adhesion molecule CEACAM19 (300 aa).

A signal peptide spans 1–32 (MEIPMGTQGCFSKSLLLSASILVLWMLQGSQA). Residues 33–157 (ALYIQKIPEQ…PSTHLPTNAG (125 aa)) are Extracellular-facing. N-linked (GlcNAc...) asparagine glycosylation is present at asparagine 104. The chain crosses the membrane as a helical span at residues 158-178 (ILAATIIGSLAAGALLISCIA). At 179–300 (YLLVTRNWRG…APYCQLVPTS (122 aa)) the chain is on the cytoplasmic side. Positions 259–291 (SINPARPLPTPPHLQAEPENHQYQQDLLNPDPA) are disordered.

The protein belongs to the immunoglobulin superfamily. CEA family. Ubiquitous with highest expression in prostate, uterus, fetal brain, mammary gland, adrenal gland, skeletal muscle, small intestine, and kidney, and lower expression in lung, cerebellum, testis, liver, pancreas, bone marrow and ovary.

The protein localises to the membrane. The sequence is that of Cell adhesion molecule CEACAM19 from Homo sapiens (Human).